The chain runs to 80 residues: Kappa-actitoxin-Avd4i (80 aa).

A signal peptide spans 1-19 (MNKALFLCLVVLCAAVVFA). A propeptide spanning residues 20-31 (AEDLQKAKHAPF) is cleaved from the precursor. Intrachain disulfides connect Cys-41-Cys-76, Cys-43-Cys-69, and Cys-59-Cys-77.

The protein belongs to the sea anemone type 3 (BDS) potassium channel toxin family. Weakly expressed in the ectodermal tissue from the distal and proximal tentacles, body wall, and oral disk.

The protein resides in the secreted. It localises to the nematocyst. Its function is as follows. Blocks Kv3 voltage-gated potassium channels. Reduces blood pressure. The chain is Kappa-actitoxin-Avd4i from Anemonia viridis (Snakelocks anemone).